The following is a 427-amino-acid chain: Glutamate-1-semialdehyde 2,1-aminomutase (427 aa).

Residue Lys-265 is modified to N6-(pyridoxal phosphate)lysine.

Belongs to the class-III pyridoxal-phosphate-dependent aminotransferase family. HemL subfamily. In terms of assembly, homodimer. Pyridoxal 5'-phosphate is required as a cofactor.

It localises to the cytoplasm. The enzyme catalyses (S)-4-amino-5-oxopentanoate = 5-aminolevulinate. It functions in the pathway porphyrin-containing compound metabolism; protoporphyrin-IX biosynthesis; 5-aminolevulinate from L-glutamyl-tRNA(Glu): step 2/2. The chain is Glutamate-1-semialdehyde 2,1-aminomutase from Stutzerimonas stutzeri (strain A1501) (Pseudomonas stutzeri).